The following is a 406-amino-acid chain: Vacuole membrane protein 1 (406 aa).

Basic and acidic residues predominate over residues 1–20 (MAENGKNCDQRRVAMNKEQH). Positions 1–36 (MAENGKNCDQRRVAMNKEQHNGNFTDPSSVNEKKRR) are disordered. Residue Ala-2 is modified to N-acetylalanine. Residues 2-43 (AENGKNCDQRRVAMNKEQHNGNFTDPSSVNEKKRREREERQN) are Cytoplasmic-facing. Positions 21 to 30 (NGNFTDPSSV) are enriched in polar residues. A helical membrane pass occupies residues 44–64 (IVLWRQPLITLQYFSLEILVI). The Extracellular segment spans residues 65 to 77 (LKEWTSKLWHRQS). The helical transmembrane segment at 78-98 (IVVSFLLLLAVLIATYYVEGA) threads the bilayer. Residues 99–109 (HQQYVQRIEKQ) are Cytoplasmic-facing. The helical transmembrane segment at 110 to 130 (FLLYAYWIGLGILSSVGLGTG) threads the bilayer. Topologically, residues 131–250 (LHTFLLYLGP…ASRAKLAVQK (120 aa)) are extracellular. A VTT domain region spans residues 173-316 (GTEGTISLWS…FVIITFSKHI (144 aa)). A helical membrane pass occupies residues 251–271 (LVQKVGFFGILACASIPNPLF). Residues 272–273 (DL) lie on the Cytoplasmic side of the membrane. A helical membrane pass occupies residues 274 to 294 (AGITCGHFLVPFWTFFGATLI). Residues 295 to 305 (GKAIIKMHIQK) are Extracellular-facing. The helical transmembrane segment at 306 to 326 (IFVIITFSKHIVEQMVAFIGA) threads the bilayer. Topologically, residues 327 to 363 (VPGIGPSLQKPFQEYLEAQRQKLHHKSEMGTPQGENW) are cytoplasmic. Residues 364-384 (LSWMFEKLVVVMVCYFILSII) traverse the membrane as a helical segment. The Extracellular segment spans residues 385–406 (NSMAQSYAKRIQQRLNSEEKTK).

The protein belongs to the VMP1 family. As to quaternary structure, interacts with BECN1. Interacts with TJP1. Interacts with TP53INP2. Interacts with TMEM41B. Interacts with ATP2A2, PLN and SLN; competes with PLN and SLN to prevent them from forming an inhibitory complex with ATP2A2. Interacts with ATG2A.

Its subcellular location is the endoplasmic reticulum-Golgi intermediate compartment membrane. It is found in the cell membrane. It localises to the vacuole membrane. The protein resides in the endoplasmic reticulum membrane. It catalyses the reaction a 1,2-diacyl-sn-glycero-3-phospho-L-serine(in) = a 1,2-diacyl-sn-glycero-3-phospho-L-serine(out). The catalysed reaction is cholesterol(in) = cholesterol(out). It carries out the reaction a 1,2-diacyl-sn-glycero-3-phosphocholine(in) = a 1,2-diacyl-sn-glycero-3-phosphocholine(out). The enzyme catalyses a 1,2-diacyl-sn-glycero-3-phosphoethanolamine(in) = a 1,2-diacyl-sn-glycero-3-phosphoethanolamine(out). Functionally, phospholipid scramblase involved in lipid homeostasis and membrane dynamics processes. Has phospholipid scramblase activity toward cholesterol and phosphatidylserine, as well as phosphatidylethanolamine and phosphatidylcholine. Required for autophagosome formation: participates in early stages of autophagosome biogenesis at the endoplasmic reticulum (ER) membrane by reequilibrating the leaflets of the ER as lipids are extracted by ATG2 (ATG2A or ATG2B) to mediate autophagosome assembly. Regulates ATP2A2 activity to control ER-isolation membrane contacts for autophagosome formation. In addition to autophagy, involved in other processes in which phospholipid scramblase activity is required. Modulates ER contacts with lipid droplets, mitochondria and endosomes. Plays an essential role in formation of cell junctions. Upon stress such as bacterial and viral infection, promotes formation of cytoplasmic vacuoles followed by cell death. Involved in the cytoplasmic vacuolization of acinar cells during the early stage of acute pancreatitis. The chain is Vacuole membrane protein 1 from Pongo abelii (Sumatran orangutan).